Consider the following 286-residue polypeptide: ATP synthase gamma chain (286 aa).

It belongs to the ATPase gamma chain family. F-type ATPases have 2 components, CF(1) - the catalytic core - and CF(0) - the membrane proton channel. CF(1) has five subunits: alpha(3), beta(3), gamma(1), delta(1), epsilon(1). CF(0) has three main subunits: a, b and c.

It localises to the cell inner membrane. Produces ATP from ADP in the presence of a proton gradient across the membrane. The gamma chain is believed to be important in regulating ATPase activity and the flow of protons through the CF(0) complex. This is ATP synthase gamma chain from Shewanella sp. (strain ANA-3).